Reading from the N-terminus, the 375-residue chain is PTS system fructose-specific EIIC component (375 aa).

The PTS EIIC type-2 domain occupies 16–370 (VKEDLMTGVS…KPNFDAKMAA (355 aa)). Transmembrane regions (helical) follow at residues 24–44 (VSFM…GYAV), 68–88 (IGVA…AYAI), 93–113 (GLAP…LQAA), 122–142 (GSAG…GIVA), 160–180 (VLLI…FVLG), 203–223 (AILL…GPIN), 238–258 (VTAP…GLAL), 279–299 (VLLG…ADPA), 301–321 (VIPS…ALGV), and 340–360 (FMFI…ATAI).

It localises to the cell membrane. In terms of biological role, the phosphoenolpyruvate-dependent sugar phosphotransferase system (sugar PTS), a major carbohydrate active transport system, catalyzes the phosphorylation of incoming sugar substrates concomitantly with their translocation across the cell membrane. The enzyme II PtfABC PTS system is involved in fructose transport. The protein is PTS system fructose-specific EIIC component of Haloferax volcanii (strain ATCC 29605 / DSM 3757 / JCM 8879 / NBRC 14742 / NCIMB 2012 / VKM B-1768 / DS2) (Halobacterium volcanii).